A 298-amino-acid chain; its full sequence is Formylmethanofuran--tetrahydromethanopterin formyltransferase (298 aa).

This sequence belongs to the FTR family. In terms of assembly, homotetramer.

Its subcellular location is the cytoplasm. The enzyme catalyses N-formylmethanofuran + 5,6,7,8-tetrahydromethanopterin + H(+) = N(5)-formyl-5,6,7,8-tetrahydromethanopterin + methanofuran. The protein operates within one-carbon metabolism; formaldehyde degradation; formate from formaldehyde (H(4)MPT route): step 4/5. Functionally, catalyzes the transfer of a formyl group from 5-formyl tetrahydromethanopterin (5-formyl-H(4)MPT) to methanofuran (MFR) to produce formylmethanofuran (formyl-MFR) and tetrahydromethanopterin (H(4)MPT). This Methylococcus capsulatus (strain ATCC 33009 / NCIMB 11132 / Bath) protein is Formylmethanofuran--tetrahydromethanopterin formyltransferase.